A 258-amino-acid polypeptide reads, in one-letter code: Phosphonates import ATP-binding protein PhnC 3 (258 aa).

An ABC transporter domain is found at 2 to 246 (IEFKNVSLVY…TFEEIYGRKI (245 aa)). 35–42 (GLSGAGKS) is a binding site for ATP.

This sequence belongs to the ABC transporter superfamily. Phosphonates importer (TC 3.A.1.9.1) family. In terms of assembly, the complex is composed of two ATP-binding proteins (PhnC), two transmembrane proteins (PhnE) and a solute-binding protein (PhnD).

Its subcellular location is the cell membrane. The catalysed reaction is phosphonate(out) + ATP + H2O = phosphonate(in) + ADP + phosphate + H(+). Functionally, part of the ABC transporter complex PhnCDE involved in phosphonates import. Responsible for energy coupling to the transport system. The protein is Phosphonates import ATP-binding protein PhnC 3 of Halalkalibacterium halodurans (strain ATCC BAA-125 / DSM 18197 / FERM 7344 / JCM 9153 / C-125) (Bacillus halodurans).